A 425-amino-acid polypeptide reads, in one-letter code: Enolase (425 aa).

Gln162 is a (2R)-2-phosphoglycerate binding site. Glu204 functions as the Proton donor in the catalytic mechanism. Residues Asp241, Glu284, and Asp311 each coordinate Mg(2+). Lys336, Arg365, Ser366, and Lys387 together coordinate (2R)-2-phosphoglycerate. The active-site Proton acceptor is the Lys336.

Belongs to the enolase family. Mg(2+) serves as cofactor.

The protein localises to the cytoplasm. It localises to the secreted. The protein resides in the cell surface. The enzyme catalyses (2R)-2-phosphoglycerate = phosphoenolpyruvate + H2O. It functions in the pathway carbohydrate degradation; glycolysis; pyruvate from D-glyceraldehyde 3-phosphate: step 4/5. Functionally, catalyzes the reversible conversion of 2-phosphoglycerate (2-PG) into phosphoenolpyruvate (PEP). It is essential for the degradation of carbohydrates via glycolysis. In Brucella ovis (strain ATCC 25840 / 63/290 / NCTC 10512), this protein is Enolase.